The following is a 209-amino-acid chain: Large ribosomal subunit protein uL3 (209 aa).

The segment at 144-165 (GSMGAASDPSRTFKNKKMPGHM) is disordered.

This sequence belongs to the universal ribosomal protein uL3 family. As to quaternary structure, part of the 50S ribosomal subunit. Forms a cluster with proteins L14 and L19.

In terms of biological role, one of the primary rRNA binding proteins, it binds directly near the 3'-end of the 23S rRNA, where it nucleates assembly of the 50S subunit. The chain is Large ribosomal subunit protein uL3 from Clostridium novyi (strain NT).